The sequence spans 375 residues: tRNA-specific 2-thiouridylase MnmA (375 aa).

Residues 12–19 (GMSGGVDS) and M38 each bind ATP. Residues 98–100 (NPD) form an interaction with target base in tRNA region. The Nucleophile role is filled by C103. A disulfide bridge connects residues C103 and C200. G127 contacts ATP. The segment at 150–152 (KDQ) is interaction with tRNA. Catalysis depends on C200, which acts as the Cysteine persulfide intermediate. The interval 312–313 (RY) is interaction with tRNA.

This sequence belongs to the MnmA/TRMU family.

It is found in the cytoplasm. The enzyme catalyses S-sulfanyl-L-cysteinyl-[protein] + uridine(34) in tRNA + AH2 + ATP = 2-thiouridine(34) in tRNA + L-cysteinyl-[protein] + A + AMP + diphosphate + H(+). Catalyzes the 2-thiolation of uridine at the wobble position (U34) of tRNA, leading to the formation of s(2)U34. The protein is tRNA-specific 2-thiouridylase MnmA of Lactobacillus delbrueckii subsp. bulgaricus (strain ATCC 11842 / DSM 20081 / BCRC 10696 / JCM 1002 / NBRC 13953 / NCIMB 11778 / NCTC 12712 / WDCM 00102 / Lb 14).